The primary structure comprises 777 residues: Glucocorticoid receptor (777 aa).

Basic and acidic residues predominate over residues 1–14 (MDSKESLTPGREEN). The segment at 1–23 (MDSKESLTPGREENPSSVLAQER) is disordered. A modulating region spans residues 1–420 (MDSKESLTPG…TATTGPPPKL (420 aa)). The residue at position 8 (T8) is a Phosphothreonine. R23 carries the post-translational modification Omega-N-methylarginine. A phosphoserine mark is found at S45, S113, S134, and S141. Over residues 130 to 140 (NRSTSVPENPK) the composition is skewed to polar residues. The interval 130 to 183 (NRSTSVPENPKSSASTAVSAAPTEKEFPKTHSDISSEQQHLKGQTGTNGGNVKL) is disordered. Residues 141 to 150 (SSASTAVSAA) show a composition bias toward low complexity. The span at 152–163 (TEKEFPKTHSDI) shows a compositional bias: basic and acidic residues. The segment covering 164 to 174 (SSEQQHLKGQT) has biased composition (polar residues). Residues S203, S211, and S226 each carry the phosphoserine modification. K258 is covalently cross-linked (Glycyl lysine isopeptide (Lys-Gly) (interchain with G-Cter in SUMO2)). Phosphoserine is present on S267. Glycyl lysine isopeptide (Lys-Gly) (interchain with G-Cter in SUMO); alternate cross-links involve residues K277 and K293. Glycyl lysine isopeptide (Lys-Gly) (interchain with G-Cter in SUMO2); alternate cross-links involve residues K277 and K293. The span at 394–414 (SSPSMRPDVSSPPSSSSTATT) shows a compositional bias: low complexity. The segment at 394-415 (SSPSMRPDVSSPPSSSSTATTG) is disordered. Position 404 is a phosphoserine (S404). A Glycyl lysine isopeptide (Lys-Gly) (interchain with G-Cter in ubiquitin) cross-link involves residue K419. NR C4-type zinc fingers lie at residues 421-441 (CLVCSDEASGCHYGVLTCGSC) and 457-476 (CAGRNDCIIDKIRRKNCPAC). The nuclear receptor DNA-binding region spans 421-486 (CLVCSDEASG…RYRKCLQAGM (66 aa)). N6-acetyllysine occurs at positions 480, 492, 494, and 495. The segment at 485 to 777 (GMNLEARKTK…NIKKLLFHQK (293 aa)) is interaction with CLOCK. The hinge stretch occupies residues 487-523 (NLEARKTKKKIKGIQQATTGVSQETPENPANKTIVPA). Residues 524–758 (TLPQLTPTLV…FPEMLAEIIT (235 aa)) form the NR LBD domain. The interval 532–697 (LVSLLEVIEP…EIRMTYIKEL (166 aa)) is interaction with CRY1. A Glycyl lysine isopeptide (Lys-Gly) (interchain with G-Cter in SUMO) cross-link involves residue K703.

Belongs to the nuclear hormone receptor family. NR3 subfamily. As to quaternary structure, heteromultimeric cytoplasmic complex with HSP90AA1, HSPA1A/HSPA1B, and FKBP5 or another immunophilin such as PPID, STIP1, or the immunophilin homolog PPP5C. Upon ligand binding FKBP5 dissociates from the complex and FKBP4 takes its place, thereby linking the complex to dynein and mediating transport to the nucleus, where the complex dissociates. Probably forms a complex composed of chaperones HSP90 and HSP70, co-chaperones CDC37, PPP5C, TSC1 and client protein TSC2, CDK4, AKT, RAF1 and NR3C1; this complex does not contain co-chaperones STIP1/HOP and PTGES3/p23. Directly interacts with UNC45A. Binds to DNA as a homodimer, and as heterodimer with NR3C2 or the retinoid X receptor. Binds STAT5A and STAT5B homodimers and heterodimers. Interacts with NRIP1, POU2F1, POU2F2 and TRIM28. Interacts with several coactivator complexes, including the SMARCA4 complex, CREBBP/EP300, TADA2L (Ada complex) and p160 coactivators such as NCOA2 and NCOA6. Interaction with BAG1 inhibits transactivation. Interacts with HEXIM1 and TGFB1I1. Interacts with NCOA1. Interacts with NCOA3, SMARCA4, SMARCC1, SMARCD1, and SMARCE1. Interacts with CLOCK, CRY1 and CRY2 in a ligand-dependent fashion. Interacts with CIART. Interacts with RWDD3. Interacts with UBE2I/UBC9 and this interaction is enhanced in the presence of RWDD3. Interacts with GRIP1. Interacts with NR4A3 (via nuclear receptor DNA-binding domain), represses transcription activity of NR4A3 on the POMC promoter Nur response element (NurRE). Directly interacts with PNRC2 to attract and form a complex with UPF1 and DCP1A; the interaction leads to rapid mRNA degradation. Interacts with GSK3B. Interacts with FNIP1 and FNIP2. Interacts (via C-terminus) with HNRNPU (via C-terminus). Interacts with MCM3AP. Interacts (via domain NR LBD) with HSP90AA1 and HSP90AB1. In the absence of hormonal ligand, interacts with TACC1. Interacts (via NR LBD domain) with ZNF764 (via KRAB domain); the interaction regulates transcription factor activity of NR3C1 by directing its actions toward certain biologic pathways. Post-translationally, acetylation by CLOCK reduces its binding to glucocorticoid response elements and its transcriptional activity. In terms of processing, increased proteasome-mediated degradation in response to glucocorticoids. Phosphorylated in the absence of hormone; becomes hyperphosphorylated in the presence of glucocorticoid. The Ser-203, Ser-226 and Ser-404-phosphorylated forms are mainly cytoplasmic, and the Ser-211-phosphorylated form is nuclear. Phosphorylation at Ser-211 increases transcriptional activity. Phosphorylation at Ser-203, Ser-226 and Ser-404 decreases signaling capacity. Phosphorylation at Ser-404 may protect from glucocorticoid-induced apoptosis. Phosphorylation at Ser-203 and Ser-211 is not required in regulation of chromosome segregation. May be dephosphorylated by PPP5C, attenuates NR3C1 action. Post-translationally, ubiquitinated by UBR5, leading to its degradation: UBR5 specifically recognizes and binds ligand-bound NR3C1 when it is not associated with coactivators (NCOAs). In presence of NCOAs, the UBR5-degron is not accessible, preventing its ubiquitination and degradation. In terms of processing, sumoylation at Lys-277 and Lys-293 negatively regulates its transcriptional activity. Sumoylation at Lys-703 positively regulates its transcriptional activity in the presence of RWDD3. Sumoylation at Lys-277 and Lys-293 is dispensable whereas sumoylation at Lys-703 is critical for the stimulatory effect of RWDD3 on its transcriptional activity. Heat shock increases sumoylation in a RWDD3-dependent manner.

The protein localises to the cytoplasm. Its subcellular location is the nucleus. It localises to the mitochondrion. The protein resides in the cytoskeleton. It is found in the spindle. The protein localises to the microtubule organizing center. Its subcellular location is the centrosome. It localises to the chromosome. The protein resides in the nucleoplasm. Its function is as follows. Receptor for glucocorticoids (GC). Has a dual mode of action: as a transcription factor that binds to glucocorticoid response elements (GRE), both for nuclear and mitochondrial DNA, and as a modulator of other transcription factors. Affects inflammatory responses, cellular proliferation and differentiation in target tissues. Involved in chromatin remodeling. Plays a role in rapid mRNA degradation by binding to the 5' UTR of target mRNAs and interacting with PNRC2 in a ligand-dependent manner which recruits the RNA helicase UPF1 and the mRNA-decapping enzyme DCP1A, leading to RNA decay. Could act as a coactivator for STAT5-dependent transcription upon growth hormone (GH) stimulation and could reveal an essential role of hepatic GR in the control of body growth. Mediates glucocorticoid-induced apoptosis. Promotes accurate chromosome segregation during mitosis. May act as a tumor suppressor. May play a negative role in adipogenesis through the regulation of lipolytic and antilipogenic gene expression. The sequence is that of Glucocorticoid receptor (NR3C1) from Pongo abelii (Sumatran orangutan).